The following is a 477-amino-acid chain: Ubiquinone biosynthesis monooxygenase COQ6, mitochondrial (477 aa).

The transit peptide at 1–25 (MLGVLRIQGALASAGQARLLSVRLL) directs the protein to the mitochondrion.

This sequence belongs to the UbiH/COQ6 family. In terms of assembly, component of a multi-subunit COQ enzyme complex. It depends on FAD as a cofactor.

The protein resides in the mitochondrion inner membrane. It carries out the reaction a 4-hydroxy-3-(all-trans-polyprenyl)benzoate + 2 reduced [2Fe-2S]-[ferredoxin] + O2 + 2 H(+) = a 3,4-dihydroxy-5-(all-trans-polyprenyl)benzoate + 2 oxidized [2Fe-2S]-[ferredoxin] + H2O. The enzyme catalyses a 2-methoxy-6-(all-trans-polyprenyl)phenol + 2 reduced [2Fe-2S]-[ferredoxin] + O2 + 2 H(+) = a 2-methoxy-6-(all-trans-polyprenyl)benzene-1,4-diol + 2 oxidized [2Fe-2S]-[ferredoxin] + H2O. Its pathway is cofactor biosynthesis; ubiquinone biosynthesis. FAD-dependent monooxygenase required for two non-consecutive steps during ubiquinone biosynthesis. Required for the C5-ring hydroxylation during ubiquinone biosynthesis by catalyzing the hydroxylation of 4-hydroxy-3-(all-trans-polyprenyl)benzoic acid to 3,4-dihydroxy-5-(all-trans-polyprenyl)benzoic acid. Also acts downstream of coq4, for the C1-hydroxylation during ubiquinone biosynthesis by catalyzing the hydroxylation of 2-methoxy-6-(all-trans-polyprenyl)phenol to 2-methoxy-6-(all-trans-polyprenyl)benzene-1,4-diol. The electrons required for the hydroxylation reaction are funneled indirectly to Coq6 from NADPH via a ferredoxin/ferredoxin reductase system. This chain is Ubiquinone biosynthesis monooxygenase COQ6, mitochondrial, found in Drosophila melanogaster (Fruit fly).